We begin with the raw amino-acid sequence, 572 residues long: Proline--tRNA ligase (572 aa).

Belongs to the class-II aminoacyl-tRNA synthetase family. ProS type 1 subfamily. In terms of assembly, homodimer.

The protein localises to the cytoplasm. It catalyses the reaction tRNA(Pro) + L-proline + ATP = L-prolyl-tRNA(Pro) + AMP + diphosphate. Functionally, catalyzes the attachment of proline to tRNA(Pro) in a two-step reaction: proline is first activated by ATP to form Pro-AMP and then transferred to the acceptor end of tRNA(Pro). As ProRS can inadvertently accommodate and process non-cognate amino acids such as alanine and cysteine, to avoid such errors it has two additional distinct editing activities against alanine. One activity is designated as 'pretransfer' editing and involves the tRNA(Pro)-independent hydrolysis of activated Ala-AMP. The other activity is designated 'posttransfer' editing and involves deacylation of mischarged Ala-tRNA(Pro). The misacylated Cys-tRNA(Pro) is not edited by ProRS. The protein is Proline--tRNA ligase of Edwardsiella ictaluri (strain 93-146).